Here is a 430-residue protein sequence, read N- to C-terminus: MLLTLYTCLLWLSTSGLWTIQAKGTDTDVSTRNPHRDLAPNNVDFAFTLYKHLVASAPGKNVFISPVSISMALAMLSLGARGYTREQLLQGLGFSLVEMSEAEIHQAFRHLHHLLRESNTTLEMTMGNALFLDHSLELLESFSADTKHYYELEALTTDFQDWAGASRQINEYIKNKTQGKIVDLFSESDSSAMFILVNYIFFKGMWVHSFDLESTREENFYVNEATTVWVPMMFQSNTIKYLNDSVLPCQLVQLDYTGNETVFFVLPVKGKMDSVITALSRDTIQRWSKSLTMSQVDLYIPKISISGAYDLGGIMGDMGIADLLSNRTHFSGITQEALPKVSKVVHKAALQVDEKGLEAAAPTRVSVTAAPGPLTLRFNRPFIIMIFDDFTWSSLFLGKVVNPTEGALPGAKLRLTRAPRAHRKGWEGSP.

A signal peptide spans M1–A22. N-linked (GlcNAc...) asparagine glycosylation is found at N119, N175, and N243. Residue Q253 coordinates cortisol. An N-linked (GlcNAc...) asparagine glycan is attached at N259. A cortisol-binding site is contributed by Q285. An N-linked (GlcNAc...) asparagine glycan is attached at N326. W392 contacts cortisol.

This sequence belongs to the serpin family. As to expression, expressed by the liver; secreted in plasma.

Its subcellular location is the secreted. In terms of biological role, major transport protein for glucocorticoids and progestins in the blood of almost all vertebrate species. The polypeptide is Corticosteroid-binding globulin (SERPINA6) (Ovis aries (Sheep)).